A 339-amino-acid polypeptide reads, in one-letter code: Dihydroorotate dehydrogenase (quinone) (339 aa).

FMN is bound by residues 64–68 (AGADK) and Thr88. Lys68 is a binding site for substrate. Residue 113-117 (NRNGF) participates in substrate binding. Positions 141 and 174 each coordinate FMN. Asn174 contacts substrate. Ser177 serves as the catalytic Nucleophile. Asn179 is a binding site for substrate. Positions 219 and 247 each coordinate FMN. Residue 248-249 (NT) coordinates substrate. Residues Gly270, Gly299, and 320-321 (YS) each bind FMN.

This sequence belongs to the dihydroorotate dehydrogenase family. Type 2 subfamily. As to quaternary structure, monomer. FMN is required as a cofactor.

The protein localises to the cell membrane. The catalysed reaction is (S)-dihydroorotate + a quinone = orotate + a quinol. It participates in pyrimidine metabolism; UMP biosynthesis via de novo pathway; orotate from (S)-dihydroorotate (quinone route): step 1/1. In terms of biological role, catalyzes the conversion of dihydroorotate to orotate with quinone as electron acceptor. The polypeptide is Dihydroorotate dehydrogenase (quinone) (pyrD) (Pasteurella multocida (strain Pm70)).